Here is a 283-residue protein sequence, read N- to C-terminus: UPF0276 protein Anae109_1558 (283 aa).

This sequence belongs to the UPF0276 family.

The protein is UPF0276 protein Anae109_1558 of Anaeromyxobacter sp. (strain Fw109-5).